Reading from the N-terminus, the 58-residue chain is U8-ctenitoxin-Pk1a (58 aa).

5 disulfide bridges follow: Cys-2–Cys-16, Cys-9–Cys-22, Cys-15–Cys-40, Cys-24–Cys-38, and Cys-48–Cys-55.

As to expression, expressed by the venom gland.

It is found in the secreted. No toxic effects on mice at dose levels of 5 ug per mouse. May be toxic to insects. This Phoneutria keyserlingi (Brazilian wandering spider) protein is U8-ctenitoxin-Pk1a.